A 60-amino-acid polypeptide reads, in one-letter code: Toxin 4.9.6 (60 aa).

Intrachain disulfides connect C3/C22, C17/C38, C40/C52, and C53/C58.

It belongs to the three-finger toxin family. Short-chain subfamily. Orphan group XI sub-subfamily. As to expression, expressed by the venom gland.

It is found in the secreted. The protein is Toxin 4.9.6 of Dendroaspis viridis (Western green mamba).